A 181-amino-acid chain; its full sequence is Shikimate kinase 2 (181 aa).

ATP is bound at residue 12–17; that stretch reads GCGKTT. The Mg(2+) site is built by threonine 16 and aspartate 32. The substrate site is built by aspartate 34, arginine 58, and glycine 79. An LID domain region spans residues 112-126; the sequence is EAEPEVGLRPTLTGK. Arginine 120 lines the ATP pocket. Substrate is bound at residue arginine 139.

It belongs to the shikimate kinase family. AroL subfamily. As to quaternary structure, monomer. It depends on Mg(2+) as a cofactor.

It is found in the cytoplasm. It catalyses the reaction shikimate + ATP = 3-phosphoshikimate + ADP + H(+). Its pathway is metabolic intermediate biosynthesis; chorismate biosynthesis; chorismate from D-erythrose 4-phosphate and phosphoenolpyruvate: step 5/7. Its function is as follows. Catalyzes the specific phosphorylation of the 3-hydroxyl group of shikimic acid using ATP as a cosubstrate. The protein is Shikimate kinase 2 of Escherichia fergusonii (strain ATCC 35469 / DSM 13698 / CCUG 18766 / IAM 14443 / JCM 21226 / LMG 7866 / NBRC 102419 / NCTC 12128 / CDC 0568-73).